We begin with the raw amino-acid sequence, 175 residues long: B9 domain-containing protein 2 (175 aa).

A C2 B9-type domain is found at 2-118 (AEVHVIGQII…DCPTWRPLGS (117 aa)).

It belongs to the B9D family. In terms of assembly, part of the tectonic-like complex (also named B9 complex). Interacts with TUBG1.

The protein resides in the cytoplasm. Its subcellular location is the cytoskeleton. The protein localises to the cilium basal body. It localises to the cilium axoneme. It is found in the nucleus. Its function is as follows. Component of the tectonic-like complex, a complex localized at the transition zone of primary cilia and acting as a barrier that prevents diffusion of transmembrane proteins between the cilia and plasma membranes. This is B9 domain-containing protein 2 (B9d2) from Rattus norvegicus (Rat).